The sequence spans 1445 residues: Spermatogenesis-associated protein 31E1 (1445 aa).

The helical transmembrane segment at Trp-64–Leu-84 threads the bilayer. 2 disordered regions span residues Pro-90–Arg-115 and Val-169–Ser-262. Residues Ser-101–Gly-110 are compositionally biased toward basic and acidic residues. The segment covering Val-241–Asp-260 has biased composition (pro residues). N-linked (GlcNAc...) asparagine glycosylation occurs at Asn-408. 4 disordered regions span residues Thr-411–Asn-430, Asn-460–Gln-557, Leu-592–Val-619, and Gln-637–Leu-761. Residues Pro-664 to Ser-681 show a composition bias toward polar residues. 3 N-linked (GlcNAc...) asparagine glycosylation sites follow: Asn-819, Asn-906, and Asn-1160. Disordered regions lie at residues Phe-894–Leu-966, Arg-1143–Lys-1242, Lys-1254–Gly-1280, and Ser-1378–Ser-1445. Polar residues-rich tracts occupy residues Asn-906 to Thr-915 and Ala-1148 to Gln-1165. A compositionally biased stretch (basic and acidic residues) spans Asp-1202 to His-1217.

The protein belongs to the SPATA31 family.

Its subcellular location is the membrane. In terms of biological role, may play a role in spermatogenesis. This chain is Spermatogenesis-associated protein 31E1 (SPATA31E1), found in Homo sapiens (Human).